A 202-amino-acid chain; its full sequence is Small ribosomal subunit protein uS4 (202 aa).

An S4 RNA-binding domain is found at 91 to 157 (CRLDNVVYRA…TPFIVARETH (67 aa)).

It belongs to the universal ribosomal protein uS4 family. Part of the 30S ribosomal subunit. Contacts protein S5. The interaction surface between S4 and S5 is involved in control of translational fidelity.

In terms of biological role, one of the primary rRNA binding proteins, it binds directly to 16S rRNA where it nucleates assembly of the body of the 30S subunit. Its function is as follows. With S5 and S12 plays an important role in translational accuracy. The protein is Small ribosomal subunit protein uS4 of Nocardioides sp. (strain ATCC BAA-499 / JS614).